We begin with the raw amino-acid sequence, 231 residues long: NKG2-C type II integral membrane protein (231 aa).

Residues Met1 to Ser12 are compositionally biased toward polar residues. The interval Met1–Ile31 is disordered. The Cytoplasmic portion of the chain corresponds to Met1–Lys70. A compositionally biased stretch (basic and acidic residues) spans Asp16–Lys28. Residues Leu71–Leu93 form a helical; Signal-anchor for type II membrane protein membrane-spanning segment. The Extracellular portion of the chain corresponds to Ile94–Leu231. Asn100 carries N-linked (GlcNAc...) asparagine glycosylation. The 114-residue stretch at His116–His229 folds into the C-type lectin domain. Cystine bridges form between Cys117–Cys128, Cys145–Cys227, and Cys206–Cys219. An N-linked (GlcNAc...) asparagine glycan is attached at Asn149.

In terms of assembly, heterodimer with KLRD1; disulfide-linked. KLRD1-KLRC2 receptor complex interacts with TYROBP/DAP12 homodimer; this interaction is necessary for the expression on the cell surface. Natural killer cells.

It is found in the cell membrane. Functionally, immune activating receptor involved in self-nonself discrimination. In complex with KLRD1 on cytotoxic lymphocyte subsets, recognizes non-classical major histocompatibility MHC-E loaded with signal sequence-derived peptides from non-classical MHC-G molecules, likely playing a role in the generation and effector functions of adaptive natural killer (NK) cells and in maternal-fetal tolerance during pregnancy. Regulates the effector functions of terminally differentiated cytotoxic lymphocyte subsets, and in particular may play a role in adaptive NK cell response to viral infection. Upon MHC-E-peptide binding, transmits intracellular signals via the adapter protein TYROBP/DAP12, triggering the phosphorylation of proximal signaling molecules and cell activation. In Macaca mulatta (Rhesus macaque), this protein is NKG2-C type II integral membrane protein (KLRC2).